The chain runs to 458 residues: E3 ubiquitin-protein ligase RNF25 (458 aa).

Residues S18–N128 form the RWD domain. Positions 135, 138, 153, 155, 161, 197, and 200 each coordinate Zn(2+). The segment at C135–R201 adopts an RING-type zinc-finger fold. Disordered stretches follow at residues P267 to T299 and K317 to S458. Polar residues-rich tracts occupy residues G282 to T299 and L362 to Q372. Composition is skewed to basic and acidic residues over residues P377–S388 and R412–K423. Low complexity predominate over residues P432–P443.

The protein belongs to the RNF25 family. In terms of assembly, interacts with UBE2D2, and may also interact with UBE2E1 and UBE2E3. Interacts with RELA/p65. Ubiquitinated; autoubiquitinated.

Its subcellular location is the cytoplasm. It catalyses the reaction S-ubiquitinyl-[E2 ubiquitin-conjugating enzyme]-L-cysteine + [acceptor protein]-L-lysine = [E2 ubiquitin-conjugating enzyme]-L-cysteine + N(6)-ubiquitinyl-[acceptor protein]-L-lysine.. It functions in the pathway protein modification; protein ubiquitination. Its function is as follows. E3 ubiquitin-protein ligase that plays a key role in the RNF14-RNF25 translation quality control pathway, a pathway that takes place when a ribosome has stalled during translation, and which promotes ubiquitination and degradation of translation factors on stalled ribosomes. Catalyzes ubiquitination of RPS27A in response to ribosome collisions, promoting activation of RNF14. RNF25 catalyzes ubiquitination of other ribosomal proteins on stalled ribosomes, such as RPL0, RPL1, RPL12, RPS13 and RPS17. Also involved in ubiquitination and degradation of stalled ETF1/eRF1. Independently of its function in the response to stalled ribosomes, mediates ubiquitination and subsequent proteasomal degradation of NKD2. May also stimulate transcription mediated by NF-kappa-B via its interaction with RELA/p65. The chain is E3 ubiquitin-protein ligase RNF25 (RNF25) from Bos taurus (Bovine).